A 509-amino-acid chain; its full sequence is Lysine--tRNA ligase (509 aa).

Residues Glu-418 and Glu-425 each coordinate Mg(2+).

This sequence belongs to the class-II aminoacyl-tRNA synthetase family. In terms of assembly, homodimer. Mg(2+) is required as a cofactor.

It is found in the cytoplasm. It carries out the reaction tRNA(Lys) + L-lysine + ATP = L-lysyl-tRNA(Lys) + AMP + diphosphate. This is Lysine--tRNA ligase from Acinetobacter baumannii (strain AB307-0294).